Reading from the N-terminus, the 140-residue chain is ATP synthase epsilon chain (140 aa).

It belongs to the ATPase epsilon chain family. In terms of assembly, F-type ATPases have 2 components, CF(1) - the catalytic core - and CF(0) - the membrane proton channel. CF(1) has five subunits: alpha(3), beta(3), gamma(1), delta(1), epsilon(1). CF(0) has three main subunits: a, b and c.

It is found in the cell inner membrane. Produces ATP from ADP in the presence of a proton gradient across the membrane. The protein is ATP synthase epsilon chain of Stenotrophomonas maltophilia (strain R551-3).